Here is a 117-residue protein sequence, read N- to C-terminus: Large ribosomal subunit protein bL20 (117 aa).

The protein belongs to the bacterial ribosomal protein bL20 family.

Binds directly to 23S ribosomal RNA and is necessary for the in vitro assembly process of the 50S ribosomal subunit. It is not involved in the protein synthesizing functions of that subunit. The protein is Large ribosomal subunit protein bL20 (rplT) of Rickettsia prowazekii (strain Madrid E).